Consider the following 439-residue polypeptide: Ribosomal protein uS12 methylthiotransferase RimO (439 aa).

The 111-residue stretch at 5–115 (PKIGFVSLGC…LIEAVHTHAP (111 aa)) folds into the MTTase N-terminal domain. Positions 14, 50, 79, 146, 150, and 153 each coordinate [4Fe-4S] cluster. In terms of domain architecture, Radical SAM core spans 132–369 (LTPRHYSYLK…MGLQAQISAD (238 aa)). The TRAM domain maps to 372–439 (QRFVGTEQQV…ESTEYDLIAD (68 aa)).

The protein belongs to the methylthiotransferase family. RimO subfamily. It depends on [4Fe-4S] cluster as a cofactor.

It is found in the cytoplasm. The enzyme catalyses L-aspartate(89)-[ribosomal protein uS12]-hydrogen + (sulfur carrier)-SH + AH2 + 2 S-adenosyl-L-methionine = 3-methylsulfanyl-L-aspartate(89)-[ribosomal protein uS12]-hydrogen + (sulfur carrier)-H + 5'-deoxyadenosine + L-methionine + A + S-adenosyl-L-homocysteine + 2 H(+). Functionally, catalyzes the methylthiolation of an aspartic acid residue of ribosomal protein uS12. The polypeptide is Ribosomal protein uS12 methylthiotransferase RimO (Francisella philomiragia subsp. philomiragia (strain ATCC 25017 / CCUG 19701 / FSC 153 / O#319-036)).